Here is a 488-residue protein sequence, read N- to C-terminus: SAGA complex subunit HFI1 (488 aa).

2 disordered regions span residues 1–58 and 352–383; these read MSAI…QGPN and QLDD…IGDI. The span at 37–58 shows a compositional bias: polar residues; that stretch reads AVSNHTEPNNGNNETAEPQGPN.

In terms of assembly, component of the 1.8 MDa SAGA (Spt-Ada-Gcn5 acetyltransferase) complex, which is composed of 19 subunits TRA1, SPT7, TAF5, NGG1/ADA3, SGF73, SPT20/ADA5, SPT8, TAF12, TAF6, HFI1/ADA1, UBP8, GCN5, ADA2, SPT3, SGF29, TAF10, TAF9, SGF11 and SUS1. The SAGA complex is composed of 4 modules, namely the HAT (histone acetyltransferase) module (GCN5, ADA2, NGG1/ADA3 and SGF29), the DUB (deubiquitinating) module (UBP8, SGF11, SGF73 and SUS1), the core or TAF (TBP-associated factor) module (TAF5, TAF6, TAF9, TAF10 and TAF12), and the Tra1 or SPT (Suppressor of Ty) module (TRA1, HFI1/ADA1, SPT3, SPT7, SPT8 and SPT20/ADA5). The Tra1/SPT module binds activators, the core module recruits TBP (TATA-binding protein), the HAT module contains the histone H3 acetyltransferase GCN5, and the DUB module comprises the histone H2B deubiquitinase UBP8. Also identified in an altered form of SAGA, named SALSA (SAGA altered, Spt8 absent) or SLIK (SAGA-like) complex, which contains a C-terminal truncated form of SPT7 and is missing SPT8. However, it has been shown that the SAGA and SAGA-like SALSA/SLIK transcriptional coactivators are structurally and biochemically equivalent. Component of an ADA/GCN5 complex that consists of HFI1/ADA1, ADA2, NGG1/ADA3, SPT20/ADA5 and GCN5 and probably is a subcomplex of SAGA.

It localises to the nucleus. Component of the transcription coactivator SAGA complex. SAGA acts as a general cofactor required for essentially all RNA polymerase II transcription. At the promoters, SAGA is required for transcription pre-initiation complex (PIC) recruitment. It influences RNA polymerase II transcriptional activity through different activities such as TBP interaction (via core/TAF module) and promoter selectivity, interaction with transcription activators (via Tra1/SPT module), and chromatin modification through histone acetylation (via HAT module) and deubiquitination (via DUB module). SAGA preferentially acetylates histones H3 (to form H3K9ac, H3K14ac, H3K18ac and H3K23ac) and H2B and deubiquitinates histone H2B. SAGA interacts with DNA via upstream activating sequences (UASs). Also identified in a modified version of SAGA named SALSA or SLIK. The cleavage of SPT7 and the absence of the SPT8 subunit in SLIK neither drive any major conformational differences in its structure compared with SAGA, nor significantly affect HAT, DUB, or DNA-binding activities. The sequence is that of SAGA complex subunit HFI1 (HFI1) from Saccharomyces cerevisiae (strain ATCC 204508 / S288c) (Baker's yeast).